The primary structure comprises 238 residues: Orotidine 5'-phosphate decarboxylase (238 aa).

Residues D13, K35, 62 to 71 (DLKFHDIPNT), T121, R182, Q191, G211, and R212 contribute to the substrate site. Catalysis depends on K64, which acts as the Proton donor.

Belongs to the OMP decarboxylase family. Type 1 subfamily. Homodimer.

It catalyses the reaction orotidine 5'-phosphate + H(+) = UMP + CO2. Its pathway is pyrimidine metabolism; UMP biosynthesis via de novo pathway; UMP from orotate: step 2/2. Functionally, catalyzes the decarboxylation of orotidine 5'-monophosphate (OMP) to uridine 5'-monophosphate (UMP). The polypeptide is Orotidine 5'-phosphate decarboxylase (Saccharophagus degradans (strain 2-40 / ATCC 43961 / DSM 17024)).